Consider the following 129-residue polypeptide: Glycine cleavage system H protein (129 aa).

A Lipoyl-binding domain is found at T24 to K106. Position 65 is an N6-lipoyllysine (K65).

Belongs to the GcvH family. The glycine cleavage system is composed of four proteins: P, T, L and H. Requires (R)-lipoate as cofactor.

In terms of biological role, the glycine cleavage system catalyzes the degradation of glycine. The H protein shuttles the methylamine group of glycine from the P protein to the T protein. The protein is Glycine cleavage system H protein of Escherichia coli O127:H6 (strain E2348/69 / EPEC).